The chain runs to 100 residues: ATP synthase subunit c (100 aa).

Transmembrane regions (helical) follow at residues 30–50 and 80–100; these read LLYL…GVGM and AFIE…LFVV.

Belongs to the ATPase C chain family. In terms of assembly, F-type ATPases have 2 components, F(1) - the catalytic core - and F(0) - the membrane proton channel. F(1) has five subunits: alpha(3), beta(3), gamma(1), delta(1), epsilon(1). F(0) has three main subunits: a(1), b(2) and c(10-14). The alpha and beta chains form an alternating ring which encloses part of the gamma chain. F(1) is attached to F(0) by a central stalk formed by the gamma and epsilon chains, while a peripheral stalk is formed by the delta and b chains.

The protein localises to the cell inner membrane. In terms of biological role, f(1)F(0) ATP synthase produces ATP from ADP in the presence of a proton or sodium gradient. F-type ATPases consist of two structural domains, F(1) containing the extramembraneous catalytic core and F(0) containing the membrane proton channel, linked together by a central stalk and a peripheral stalk. During catalysis, ATP synthesis in the catalytic domain of F(1) is coupled via a rotary mechanism of the central stalk subunits to proton translocation. Its function is as follows. Key component of the F(0) channel; it plays a direct role in translocation across the membrane. A homomeric c-ring of between 10-14 subunits forms the central stalk rotor element with the F(1) delta and epsilon subunits. The polypeptide is ATP synthase subunit c (Aquifex aeolicus (strain VF5)).